A 182-amino-acid chain; its full sequence is MAQKERSERDERESEFVDRLVHINRVAKVVKGGRRFGFAALVVVGDQKGRVGFGHGKAREVPEAVRKATESAKRGMIYVPLRSGRTLHHDLEGHHGAGRVLLRSASAGTGIIAGGPMRAIFETLGMQDVVAKSLGSSNPYNMVRATFDALKRQMHPRDIAAQRGIKYSTLQARRQHLVDAEG.

In terms of domain architecture, S5 DRBM spans 16 to 79; sequence FVDRLVHINR…ESAKRGMIYV (64 aa).

Belongs to the universal ribosomal protein uS5 family. Part of the 30S ribosomal subunit. Contacts proteins S4 and S8.

Functionally, with S4 and S12 plays an important role in translational accuracy. Located at the back of the 30S subunit body where it stabilizes the conformation of the head with respect to the body. The chain is Small ribosomal subunit protein uS5 from Bartonella henselae (strain ATCC 49882 / DSM 28221 / CCUG 30454 / Houston 1) (Rochalimaea henselae).